Consider the following 255-residue polypeptide: 5'-nucleotidase SurE (255 aa).

The a divalent metal cation site is built by Asp-8, Asp-9, Ser-39, and Asn-95.

The protein belongs to the SurE nucleotidase family. A divalent metal cation serves as cofactor.

Its subcellular location is the cytoplasm. The catalysed reaction is a ribonucleoside 5'-phosphate + H2O = a ribonucleoside + phosphate. Nucleotidase that shows phosphatase activity on nucleoside 5'-monophosphates. This is 5'-nucleotidase SurE from Thermosipho melanesiensis (strain DSM 12029 / CIP 104789 / BI429).